A 155-amino-acid chain; its full sequence is Protein phosphatase 1 regulatory subunit 17 (155 aa).

A disordered region spans residues 41–73 (KKKPRKGKNVQATLNVESDQKKPRRKDTPALHI). Residues 58 to 69 (SDQKKPRRKDTP) are compositionally biased toward basic and acidic residues. Residues threonine 68 and threonine 119 each carry the phosphothreonine; by PKG/PRKG1 modification.

In terms of processing, substrate for cGMP-dependent protein kinase. Phosphorylated by PRKG1 isoform alpha. Phosphorylation of Thr-68 and Thr-119 is required for its phosphatase activity. Post-translationally, substrate for cGMP-dependent protein kinase. In terms of tissue distribution, highly expressed in cerebellum.

Inhibits phosphatase activities of protein phosphatase 1 (PP1) and protein phosphatase 2A (PP2A) complexes. This is Protein phosphatase 1 regulatory subunit 17 (PPP1R17) from Homo sapiens (Human).